A 391-amino-acid chain; its full sequence is Formate-dependent phosphoribosylglycinamide formyltransferase (391 aa).

N(1)-(5-phospho-beta-D-ribosyl)glycinamide contacts are provided by residues 20–21 and glutamate 80; that span reads EL. ATP-binding positions include arginine 112, lysine 153, 158-163, 193-196, and glutamate 201; these read SSGKGQ and EGFV. Residues 117–306 enclose the ATP-grasp domain; that stretch reads RLAAETLGLP…EFALHVRAIL (190 aa). Glutamate 265 and glutamate 277 together coordinate Mg(2+). Residues aspartate 284, lysine 354, and 361 to 362 contribute to the N(1)-(5-phospho-beta-D-ribosyl)glycinamide site; that span reads RR.

This sequence belongs to the PurK/PurT family. As to quaternary structure, homodimer.

It catalyses the reaction N(1)-(5-phospho-beta-D-ribosyl)glycinamide + formate + ATP = N(2)-formyl-N(1)-(5-phospho-beta-D-ribosyl)glycinamide + ADP + phosphate + H(+). Its pathway is purine metabolism; IMP biosynthesis via de novo pathway; N(2)-formyl-N(1)-(5-phospho-D-ribosyl)glycinamide from N(1)-(5-phospho-D-ribosyl)glycinamide (formate route): step 1/1. Involved in the de novo purine biosynthesis. Catalyzes the transfer of formate to 5-phospho-ribosyl-glycinamide (GAR), producing 5-phospho-ribosyl-N-formylglycinamide (FGAR). Formate is provided by PurU via hydrolysis of 10-formyl-tetrahydrofolate. The polypeptide is Formate-dependent phosphoribosylglycinamide formyltransferase (Shewanella putrefaciens (strain CN-32 / ATCC BAA-453)).